We begin with the raw amino-acid sequence, 459 residues long: Cysteine--tRNA ligase (459 aa).

Cys-29 contributes to the Zn(2+) binding site. Residues 31 to 41 carry the 'HIGH' region motif; the sequence is VTTYDYCHIGH. Positions 210, 235, and 239 each coordinate Zn(2+). Residues 267 to 271 carry the 'KMSKS' region motif; that stretch reads KMSKS. Lys-270 lines the ATP pocket.

Belongs to the class-I aminoacyl-tRNA synthetase family. As to quaternary structure, monomer. Requires Zn(2+) as cofactor.

It localises to the cytoplasm. It catalyses the reaction tRNA(Cys) + L-cysteine + ATP = L-cysteinyl-tRNA(Cys) + AMP + diphosphate. The polypeptide is Cysteine--tRNA ligase (Idiomarina loihiensis (strain ATCC BAA-735 / DSM 15497 / L2-TR)).